The chain runs to 79 residues: Acyl carrier protein 1 (79 aa).

A Carrier domain is found at 2–77 (DNIEQRVKKI…QAIDYARANV (76 aa)). Residue S37 is modified to O-(pantetheine 4'-phosphoryl)serine.

It belongs to the acyl carrier protein (ACP) family. 4'-phosphopantetheine is transferred from CoA to a specific serine of apo-ACP by AcpS. This modification is essential for activity because fatty acids are bound in thioester linkage to the sulfhydryl of the prosthetic group.

The protein localises to the cytoplasm. Its pathway is lipid metabolism; fatty acid biosynthesis. In terms of biological role, carrier of the growing fatty acid chain in fatty acid biosynthesis. In Ralstonia nicotianae (strain ATCC BAA-1114 / GMI1000) (Ralstonia solanacearum), this protein is Acyl carrier protein 1.